Consider the following 409-residue polypeptide: MAEASVDLGTGDNLEQKILQVLSDAGSPVQIDQLLKKLQVPKKILNQVLYRLKKEGRVSSPAPATWSLGGDGASGDGAPEIPEDSAAQPSLEERILRFLETKGPQRALHIAKALGMTTAKEVNPILYSMRNKHLLTVSDTQMWTIYRSSQEGQERACSGVGQESPAVIYQQNPINMICQQGPNSLISISNSKAIQIGHGNVMSRQTICGDPGPGTPHHAPLPVLEDAAAQDTPPGTHGAQLIHLNKSMLRRVQLGHGNEMNLERDPVEHPIFSFSSSPPESTTTADPETAFNMQTPEPGPHPEGGTTQIVHIKSCLLEDTTVGNNNKMTIHRRSKGGTKESADSQELKEDTGASSEATPPRSCLHTPSDSTLLTSELTAMALGDGSPQITESMLREDEVQAAETCQTQD.

Z-binding domains follow at residues 8-70 (LGTG…SLGG) and 85-147 (SAAQ…TIYR). Residues lysine 17 and lysine 43 each participate in a glycyl lysine isopeptide (Lys-Gly) (interchain with G-Cter in ubiquitin) cross-link. A disordered region spans residues 59–87 (SSPAPATWSLGGDGASGDGAPEIPEDSAA). 2 short sequence motifs (RIP homotypic interaction motif (RHIM)) span residues 183 to 207 (NSLI…RQTI) and 241 to 265 (LIHL…LERD). Disordered stretches follow at residues 269–307 (HPIF…GGTT) and 323–369 (GNNN…TPSD). Residues 270-290 (PIFSFSSSPPESTTTADPETA) show a composition bias toward low complexity. Over residues 337–351 (GTKESADSQELKEDT) the composition is skewed to basic and acidic residues.

As to quaternary structure, homodimer. Interacts (via RIP homotypic interaction motif) with RIPK3; leading to RIPK3 activation and necroptosis; interaction is enhanced by CASP6. Interacts (via RIP homotypic interaction motif) with RIPK1. Component of the AIM2 PANoptosome complex, a multiprotein complex that drives inflammatory cell death (PANoptosis). In terms of processing, ubiquitinated; polyubiquitinated following influenza A virus (IAV) infection. Phosphorylated.

Its subcellular location is the cytoplasm. It is found in the nucleus. ZBP1-dependent necroptosis is normally inhibited by RIPK1: RIPK1 inhibits the ZBP1-induced activation of RIPK3 via FADD-mediated recruitment of CASP8, which cleaves RIPK1 and limits TNF-induced necroptosis. Functionally, key innate sensor that recognizes and binds Z-RNA structures, which are produced by a number of viruses, such as herpesvirus, orthomyxovirus or flavivirus, and triggers different forms of cell death. ZBP1 acts as an essential mediator of pyroptosis, necroptosis and apoptosis (PANoptosis), an integral part of host defense against pathogens, by activating RIPK3, caspase-8 (CASP8), and the NLRP3 inflammasome. Key activator of necroptosis, a programmed cell death process in response to death-inducing TNF-alpha family members, via its ability to bind Z-RNA: once activated upon Z-RNA-binding, ZBP1 interacts and stimulates RIPK3 kinase, which phosphorylates and activates MLKL, triggering execution of programmed necrosis. In addition to TNF-induced necroptosis, necroptosis can also take place in the nucleus in response to orthomyxoviruses infection: ZBP1 recognizes and binds Z-RNA structures that are produced in infected nuclei by orthomyxoviruses, such as the influenza A virus (IAV), leading to ZBP1 activation, RIPK3 stimulation and subsequent MLKL phosphorylation, triggering disruption of the nuclear envelope and leakage of cellular DNA into the cytosol. ZBP1-dependent cell death in response to IAV infection promotes interleukin-1 alpha (IL1A) induction in an NLRP3-inflammasome-independent manner: IL1A expression is required for the optimal interleukin-1 beta (IL1B) production, and together, these cytokines promote infiltration of inflammatory neutrophils to the lung, leading to the formation of neutrophil extracellular traps. In addition to its direct role in driving necroptosis via its ability to sense Z-RNAs, also involved in PANoptosis triggered in response to bacterial infection: component of the AIM2 PANoptosome complex, a multiprotein complex that triggers PANoptosis. Also acts as the apical sensor of fungal infection responsible for activating PANoptosis. Involved in CASP8-mediated cell death via its interaction with RIPK1 but independently of its ability to sense Z-RNAs. In some cell types, also able to restrict viral replication by promoting cell death-independent responses. In response to flavivirus infection in neurons, promotes a cell death-independent pathway that restricts viral replication: together with RIPK3, promotes a death-independent transcriptional program that modifies the cellular metabolism via up-regulation expression of the enzyme ACOD1/IRG1 and production of the metabolite itaconate. Itaconate inhibits the activity of succinate dehydrogenase, generating a metabolic state in neurons that suppresses replication of viral genomes. This Rattus norvegicus (Rat) protein is Z-DNA-binding protein 1.